A 408-amino-acid chain; its full sequence is MVQINENYLKLKAGYLFPEISKRVNSYTQANQGSEVIKLGIGDVTEPLPNACINAMSKALNEMGTHEGFKGYGPEQGYEWLREKISKNDFISRGCQITPEEIFVSDGSKCDSSNILDILGHDNLIAVTDPVYPVYVDSNVMTGRTGETLKNGTYQGLLYLAINEDNNFLPEIPKNKVDIVYLCFPNNPTGATITKDELKKWVDYANHNKSLILFDAAYEAFIQDKDVPHSIYEIDGAKSCAIEFRSFSKNAGFTGVRCAYTVIPKCLTGQNSKGDKVDLWPLWNRRQCTKFNGVSYVVQKGAEAVYSSQGKKEVNSLIDFYMENAKIMRNKLRSAGFTVYGGCNAPYVWIKVPADMTSWDFFDHLLEKANVVGTPGSGFGLAGEGYFRLSAFNSRLNVSNAMERIINI.

The substrate site is built by Tyr15 and Gly42. Pyridoxal 5'-phosphate-binding positions include Tyr72, 108–109 (SK), Tyr132, Asn187, Tyr218, and 246–248 (SFS). Positions 109, 132, and 187 each coordinate substrate. An N6-(pyridoxal phosphate)lysine modification is found at Lys249. Residues Arg257 and Asn292 each contribute to the pyridoxal 5'-phosphate site. 2 residues coordinate substrate: Asn292 and Arg388.

This sequence belongs to the class-I pyridoxal-phosphate-dependent aminotransferase family. LL-diaminopimelate aminotransferase subfamily. In terms of assembly, homodimer. Pyridoxal 5'-phosphate is required as a cofactor.

The enzyme catalyses (2S,6S)-2,6-diaminopimelate + 2-oxoglutarate = (S)-2,3,4,5-tetrahydrodipicolinate + L-glutamate + H2O + H(+). Its pathway is amino-acid biosynthesis; L-lysine biosynthesis via DAP pathway; LL-2,6-diaminopimelate from (S)-tetrahydrodipicolinate (aminotransferase route): step 1/1. Its function is as follows. Involved in the synthesis of meso-diaminopimelate (m-DAP or DL-DAP), required for both lysine and peptidoglycan biosynthesis. Catalyzes the direct conversion of tetrahydrodipicolinate to LL-diaminopimelate. The polypeptide is LL-diaminopimelate aminotransferase (Prochlorococcus marinus (strain MIT 9515)).